The chain runs to 455 residues: Post-transcriptional regulator MTA (455 aa).

Residues 17–163 (DSVSSSEFDE…QVNCQRQDDD (147 aa)) form a disordered region. Residues 23–42 (EFDESRDDETDAPTLEDEQL) show a composition bias toward acidic residues. Low complexity predominate over residues 88–98 (SPLSRPRSPSP). Short sequence motifs (nuclear localization signal) lie at residues 101–107 (RYGKKIK), 121–130 (KRPRRRPRDR), and 143–152 (RAAPKRATRR). The Zn(2+) site is built by cysteine 333, histidine 423, cysteine 427, and cysteine 432. The CHC2-type zinc-finger motif lies at 333–432 (CVFDKQSELA…HHSLCRNSEC (100 aa)).

This sequence belongs to the HHV-1 ICP27 protein family. In terms of assembly, homodimer. Homodimerization is required for transactivation. Interacts with host ALYREF. Associates in a complex with RNA, and host export factors NXF1/TAP and ALYREF; these interactions allow nuclear export of viral transcripts. Interacts with protein K-bZIP/K8; this interaction promotes viral gene expression during lytic infection. Interacts with host PABPC1. Interacts with host AGO2 and TNRC6A; these interactions inhibit host P-body formation. Interacts with PRKRA and EIF2AK2/PKR; these interactions inhibit host stress granule formation. Post-translationally, proteolytically cleaved by host caspase-7 (CASP7), leading to its inactivation, thereby preventing expression of viral lytic genes.

It localises to the host cytoplasm. The protein localises to the host nucleus. Post-transcriptional regulator that plays an essential role in the expression of viral lytic genes and productive viral replication. Possesses numerous activities that promote the expression of viral genes including enhancement of RNA stability, promotion of RNA splicing and stimulation of protein translation often via its ability to interact with different cellular cofactors. Stabilizes polyadenylated nuclear (PAN) RNA by cooperative binding to a 9-nt core of the MRE (MTA responsive element) together with host PABPC1. Functions as a viral splicing factor and promotes expression of intron-containing viral lytic genes. Protects viral transcripts from specific nuclear RNA decay pathways by preventing host MTREX recruitment that promotes unwinding and degradation of structured RNA substrates. Plays a role in the inhibition of host P-body formation by altering the scaffolding activity of TNRC6A at the initial stage thereby enhancing virus production. Also inhibits host stress granule formation by blocking autophosphorylation of EIF2AK2/PKR and its subsequent binding to dsRNA. The sequence is that of Post-transcriptional regulator MTA from Human herpesvirus 8 type P (isolate GK18) (HHV-8).